A 317-amino-acid polypeptide reads, in one-letter code: WSCD family member AAEL009094 (317 aa).

Residues 8–28 (LFGLAGTILVYIGGILFLSFV) traverse the membrane as a helical segment. N-linked (GlcNAc...) asparagine glycans are attached at residues Asn-150, Asn-226, and Asn-232.

The protein belongs to the WSCD family.

Its subcellular location is the membrane. This is WSCD family member AAEL009094 from Aedes aegypti (Yellowfever mosquito).